The following is a 318-amino-acid chain: Pantothenate kinase (318 aa).

Residue Gly-96 to Ser-103 participates in ATP binding.

It belongs to the prokaryotic pantothenate kinase family.

The protein resides in the cytoplasm. It catalyses the reaction (R)-pantothenate + ATP = (R)-4'-phosphopantothenate + ADP + H(+). It functions in the pathway cofactor biosynthesis; coenzyme A biosynthesis; CoA from (R)-pantothenate: step 1/5. The sequence is that of Pantothenate kinase from Rhodopseudomonas palustris (strain HaA2).